A 105-amino-acid chain; its full sequence is Oxytocin-neurophysin 1 (105 aa).

A disulfide bridge connects residues Cys-1 and Cys-6. Gly-9 is subject to Glycine amide. Intrachain disulfides connect Cys-22–Cys-66, Cys-25–Cys-39, Cys-33–Cys-56, Cys-40–Cys-46, Cys-73–Cys-85, Cys-79–Cys-97, and Cys-86–Cys-91.

The protein belongs to the vasopressin/oxytocin family. Interacts with oxytocin receptor (Ki=1.5 nM). Interacts with vasopressin V1aR/AVPR1A (Ki=37 nM), V1bR/AVPR1B (Ki=222 nM), and V2R/AVPR2 receptors (Ki=823 nM).

It is found in the secreted. Neurophysin 1 specifically binds oxytocin. Its function is as follows. Oxytocin causes contraction of the smooth muscle of the uterus and of the mammary gland. Acts by binding to oxytocin receptor (OXTR). The polypeptide is Oxytocin-neurophysin 1 (OXT) (Equus caballus (Horse)).